The following is a 94-amino-acid chain: Neutrophil defensin 6 (94 aa).

A signal peptide spans methionine 1–alanine 19. Residues lysine 20 to alanine 61 constitute a propeptide that is removed on maturation. 3 cysteine pairs are disulfide-bonded: cysteine 65/cysteine 93, cysteine 67/cysteine 82, and cysteine 72/cysteine 92.

The protein belongs to the alpha-defensin family.

The protein resides in the secreted. In terms of biological role, defensins 6 and 7 have bacteriostatic activity against Gram-positive bacteria S.aureus and L.monocytogenes and Gram-negative bacterium E.coli and antifungal activity against C.neoformans. Defensin 7 has microbicidial activity against Gram-positive bacteria S.aureus and L.monocytogenes. This chain is Neutrophil defensin 6, found in Macaca mulatta (Rhesus macaque).